Here is a 148-residue protein sequence, read N- to C-terminus: Deoxyuridine 5'-triphosphate nucleotidohydrolase (148 aa).

Substrate contacts are provided by residues 68–70, Asn-81, 85–87, and Lys-95; these read RSG and TID.

This sequence belongs to the dUTPase family. Mg(2+) serves as cofactor.

The enzyme catalyses dUTP + H2O = dUMP + diphosphate + H(+). Its pathway is pyrimidine metabolism; dUMP biosynthesis; dUMP from dCTP (dUTP route): step 2/2. In terms of biological role, this enzyme is involved in nucleotide metabolism: it produces dUMP, the immediate precursor of thymidine nucleotides and it decreases the intracellular concentration of dUTP so that uracil cannot be incorporated into DNA. This chain is Deoxyuridine 5'-triphosphate nucleotidohydrolase, found in Rickettsia massiliae (strain Mtu5).